A 1462-amino-acid polypeptide reads, in one-letter code: DNA topoisomerase 2 (1462 aa).

Residues Asn-79, Asn-108, 136 to 138 (SSN), and 149 to 156 (GRNGYGAK) each bind ATP. Positions 332 to 334 (NKK) are interaction with DNA. Residue 365–367 (QTK) coordinates ATP. Residues 442 to 556 (CTLILTEGDS…SLLKVPSFLV (115 aa)) enclose the Toprim domain. Mg(2+) is bound by residues Glu-448, Asp-525, and Asp-527. The Topo IIA-type catalytic domain maps to 671–1131 (KDFVNKELIL…PTTSLWLKDL (461 aa)). Tyr-761 (O-(5'-phospho-DNA)-tyrosine intermediate) is an active-site residue. Positions 947–956 (KLTSTISTSN) are interaction with DNA. 2 disordered regions span residues 1040 to 1077 (PMPR…SVSV) and 1147 to 1462 (EDDR…EDDD). The span at 1056–1068 (NDDDSEEQEDAEP) shows a compositional bias: acidic residues. A compositionally biased stretch (basic residues) spans 1167–1181 (PAKKPPQPRKNTKKA). Positions 1198 to 1207 (AVEAAKPAEV) are enriched in low complexity. The segment covering 1240 to 1250 (IESSGEKSQAM) has biased composition (polar residues). A compositionally biased stretch (basic residues) spans 1260-1275 (AGKKQNNKRGGAKKKS). The segment covering 1282 to 1300 (SDSDNEVNDVDDDDDDFEE) has biased composition (acidic residues). Composition is skewed to low complexity over residues 1314-1334 (KPAA…APAA) and 1419-1430 (APQPARARPQRA). The span at 1442–1462 (SESEEDSDEDAELSDFEEDDD) shows a compositional bias: acidic residues.

This sequence belongs to the type II topoisomerase family. Homodimer. Mg(2+) serves as cofactor. The cofactor is Mn(2+). Requires Ca(2+) as cofactor. As to expression, abundant in proliferative tissues.

It carries out the reaction ATP-dependent breakage, passage and rejoining of double-stranded DNA.. Its function is as follows. Control of topological states of DNA by transient breakage and subsequent rejoining of DNA strands. Topoisomerase II makes double-strand breaks. The chain is DNA topoisomerase 2 (TOP2) from Pisum sativum (Garden pea).